The chain runs to 128 residues: Flagellar hook-basal body complex protein FliE (128 aa).

Residues 1 to 60 are disordered; that stretch reads MRPVASFRPPPTFSALQGGASSQATKTAGIDQRGTNQAFSLLDPQSTQSNSTDSSFGEMG. Residues 33 to 55 are compositionally biased toward polar residues; it reads RGTNQAFSLLDPQSTQSNSTDSS.

It belongs to the FliE family.

The protein localises to the bacterial flagellum basal body. This chain is Flagellar hook-basal body complex protein FliE, found in Rhodopirellula baltica (strain DSM 10527 / NCIMB 13988 / SH1).